Here is a 165-residue protein sequence, read N- to C-terminus: Nucleotide-binding protein Suden_0039 (165 aa).

It belongs to the YajQ family.

In terms of biological role, nucleotide-binding protein. This is Nucleotide-binding protein Suden_0039 from Sulfurimonas denitrificans (strain ATCC 33889 / DSM 1251) (Thiomicrospira denitrificans (strain ATCC 33889 / DSM 1251)).